A 65-amino-acid chain; its full sequence is Large ribosomal subunit protein bL33m (65 aa).

The transit peptide at 1 to 8 directs the protein to the mitochondrion; that stretch reads MLLSAVSF.

The protein belongs to the bacterial ribosomal protein bL33 family. In terms of assembly, component of the mitochondrial ribosome large subunit (39S) which comprises a 16S rRNA and about 50 distinct proteins.

It is found in the mitochondrion. The protein is Large ribosomal subunit protein bL33m (Mrpl33) of Mus musculus (Mouse).